Consider the following 320-residue polypeptide: Pyrroline-5-carboxylate reductase 2 (320 aa).

At Ser2 the chain carries N-acetylserine. Residues 6–11 (IGAGQL) and Ser34 each bind NADP(+). NADPH contacts are provided by Ala8, Gln10, Leu11, Ser34, Glu36, Asn56, Val70, Lys71, and Ala97. NADP(+) is bound by residues Asn56, 69–72 (AVKP), and 95–97 (CAA). Position 164 (Glu164) interacts with L-proline. Position 230 (Asn230) interacts with NADPH. L-proline contacts are provided by Ala237 and Thr238. Low complexity predominate over residues 296-305 (TVSTLTPSSP). Residues 296–320 (TVSTLTPSSPGKLLTRSLALGGKKD) form a disordered region. Ser304 is modified (phosphoserine).

Belongs to the pyrroline-5-carboxylate reductase family. In terms of assembly, homodecamer; composed of 5 homodimers. Interacts with LTO1.

The protein localises to the cytoplasm. Its subcellular location is the mitochondrion. The catalysed reaction is L-proline + NADP(+) = (S)-1-pyrroline-5-carboxylate + NADPH + 2 H(+). It catalyses the reaction L-proline + NAD(+) = (S)-1-pyrroline-5-carboxylate + NADH + 2 H(+). It participates in amino-acid biosynthesis; L-proline biosynthesis; L-proline from L-glutamate 5-semialdehyde: step 1/1. Its function is as follows. Oxidoreductase that catalyzes the last step in proline biosynthesis, which corresponds to the reduction of pyrroline-5-carboxylate to L-proline using NAD(P)H. At physiologic concentrations, has higher specific activity in the presence of NADH. Involved in cellular response to oxidative stress. In some cell types, such as erythrocytes, its primary function may be the generation of NADP(+). The polypeptide is Pyrroline-5-carboxylate reductase 2 (PYCR2) (Pongo abelii (Sumatran orangutan)).